The chain runs to 645 residues: uncharacterized protein (645 aa).

It belongs to the mycobacterial PPE family.

This is an uncharacterized protein from Mycobacterium tuberculosis (strain CDC 1551 / Oshkosh).